The primary structure comprises 99 residues: Ragulator complex protein LAMTOR4 (99 aa).

N-acetylmethionine is present on M1. T2 is subject to N-acetylthreonine; in Ragulator complex protein LAMTOR4, N-terminally processed. S67 carries the post-translational modification Phosphoserine.

This sequence belongs to the LAMTOR4 family. In terms of assembly, part of the Ragulator complex composed of LAMTOR1, LAMTOR2, LAMTOR3, LAMTOR4 and LAMTOR5. LAMTOR4 and LAMTOR5 form a heterodimer that interacts, through LAMTOR1, with a LAMTOR2, LAMTOR3 heterodimer. The Ragulator complex interacts with both the mTORC1 complex and heterodimers constituted of the Rag GTPases RagA/RRAGA, RagB/RRAGB, RagC/RRAGC and RagD/RRAGD; regulated by amino acid availability. The Ragulator complex interacts with SLC38A9; the probable amino acid sensor. Component of the lysosomal folliculin complex (LFC), composed of FLCN, FNIP1 (or FNIP2), RagA/RRAGA or RagB/RRAGB GDP-bound, RagC/RRAGC or RagD/RRAGD GTP-bound, and Ragulator. Post-translationally, phosphorylation at Ser-67 by PKA inhibits Ragulator complex assembly.

The protein resides in the lysosome. As part of the Ragulator complex it is involved in amino acid sensing and activation of mTORC1, a signaling complex promoting cell growth in response to growth factors, energy levels, and amino acids. Activated by amino acids through a mechanism involving the lysosomal V-ATPase, the Ragulator plays a dual role for the small GTPases Rag (RagA/RRAGA, RagB/RRAGB, RagC/RRAGC and/or RagD/RRAGD): it (1) acts as a guanine nucleotide exchange factor (GEF), activating the small GTPases Rag and (2) mediates recruitment of Rag GTPases to the lysosome membrane. Activated Ragulator and Rag GTPases function as a scaffold recruiting mTORC1 to lysosomes where it is in turn activated. This Bos taurus (Bovine) protein is Ragulator complex protein LAMTOR4 (LAMTOR4).